Here is a 342-residue protein sequence, read N- to C-terminus: Ketol-acid reductoisomerase (NADP(+)) (342 aa).

In terms of domain architecture, KARI N-terminal Rossmann spans 2 to 182; sequence AEIYYDNDAD…GGLRAGGIKT (181 aa). Residues 25–28, Lys-48, Ser-51, Ser-53, and 83–86 contribute to the NADP(+) site; these read YGSQ and DQVQ. His-108 is a catalytic residue. Gly-134 contacts NADP(+). In terms of domain architecture, KARI C-terminal knotted spans 183-328; that stretch reads TFTEETETDL…RELRKLFAWN (146 aa). The Mg(2+) site is built by Asp-191, Glu-195, Glu-227, and Glu-231. A substrate-binding site is contributed by Ser-252.

Belongs to the ketol-acid reductoisomerase family. The cofactor is Mg(2+).

The enzyme catalyses (2R)-2,3-dihydroxy-3-methylbutanoate + NADP(+) = (2S)-2-acetolactate + NADPH + H(+). The catalysed reaction is (2R,3R)-2,3-dihydroxy-3-methylpentanoate + NADP(+) = (S)-2-ethyl-2-hydroxy-3-oxobutanoate + NADPH + H(+). The protein operates within amino-acid biosynthesis; L-isoleucine biosynthesis; L-isoleucine from 2-oxobutanoate: step 2/4. Its pathway is amino-acid biosynthesis; L-valine biosynthesis; L-valine from pyruvate: step 2/4. Involved in the biosynthesis of branched-chain amino acids (BCAA). Catalyzes an alkyl-migration followed by a ketol-acid reduction of (S)-2-acetolactate (S2AL) to yield (R)-2,3-dihydroxy-isovalerate. In the isomerase reaction, S2AL is rearranged via a Mg-dependent methyl migration to produce 3-hydroxy-3-methyl-2-ketobutyrate (HMKB). In the reductase reaction, this 2-ketoacid undergoes a metal-dependent reduction by NADPH to yield (R)-2,3-dihydroxy-isovalerate. The sequence is that of Ketol-acid reductoisomerase (NADP(+)) from Leifsonia xyli subsp. xyli (strain CTCB07).